Reading from the N-terminus, the 330-residue chain is MKIAIDAMGGDHAPKAVVLGAMKAIKEYSDLHITLVGKEEGIRQYLTSEERITILHTDEKIESTDEPVRAVRRKKQASMVLAAQQVKDGVADACISAGSTGALMAAGLFVVGRMEGIERPALSPTMPTVDGEGFVMLDVGANVDAKPIHLYQYAVMGSVYAEKVRGIKNPRVGLLNVGTEDGKGNELSKQVFAMLKDAPINFVGNVESRDLLQGVADVVVCDGFTGNVALKSLEGTALALFSMLKEQLMSSFTSKLAAAVLKPKLMVLKDKMDYSEYGGAALFGLKAPVIKAHGSSNDQSIFSAIRQTREMVAKEVIPTISSVMEKEPLQ.

It belongs to the PlsX family. As to quaternary structure, homodimer. Probably interacts with PlsY.

Its subcellular location is the cytoplasm. It carries out the reaction a fatty acyl-[ACP] + phosphate = an acyl phosphate + holo-[ACP]. It participates in lipid metabolism; phospholipid metabolism. Catalyzes the reversible formation of acyl-phosphate (acyl-PO(4)) from acyl-[acyl-carrier-protein] (acyl-ACP). This enzyme utilizes acyl-ACP as fatty acyl donor, but not acyl-CoA. This Bacillus mycoides (strain KBAB4) (Bacillus weihenstephanensis) protein is Phosphate acyltransferase.